The primary structure comprises 443 residues: Thymidine phosphorylase (443 aa).

Belongs to the thymidine/pyrimidine-nucleoside phosphorylase family. As to quaternary structure, homodimer.

The catalysed reaction is thymidine + phosphate = 2-deoxy-alpha-D-ribose 1-phosphate + thymine. Its pathway is pyrimidine metabolism; dTMP biosynthesis via salvage pathway; dTMP from thymine: step 1/2. In terms of biological role, the enzymes which catalyze the reversible phosphorolysis of pyrimidine nucleosides are involved in the degradation of these compounds and in their utilization as carbon and energy sources, or in the rescue of pyrimidine bases for nucleotide synthesis. In Aliivibrio fischeri (strain ATCC 700601 / ES114) (Vibrio fischeri), this protein is Thymidine phosphorylase.